Reading from the N-terminus, the 344-residue chain is Anthranilate phosphoribosyltransferase (344 aa).

5-phospho-alpha-D-ribose 1-diphosphate is bound by residues G84, 87 to 88 (GD), S92, 94 to 97 (NIST), 112 to 120 (KHGNRSASG), and S124. Position 84 (G84) interacts with anthranilate. Residue S96 participates in Mg(2+) binding. N115 lines the anthranilate pocket. R170 contributes to the anthranilate binding site. Residues D229 and E230 each coordinate Mg(2+).

This sequence belongs to the anthranilate phosphoribosyltransferase family. In terms of assembly, homodimer. Mg(2+) serves as cofactor.

The enzyme catalyses N-(5-phospho-beta-D-ribosyl)anthranilate + diphosphate = 5-phospho-alpha-D-ribose 1-diphosphate + anthranilate. The protein operates within amino-acid biosynthesis; L-tryptophan biosynthesis; L-tryptophan from chorismate: step 2/5. Its function is as follows. Catalyzes the transfer of the phosphoribosyl group of 5-phosphorylribose-1-pyrophosphate (PRPP) to anthranilate to yield N-(5'-phosphoribosyl)-anthranilate (PRA). This is Anthranilate phosphoribosyltransferase from Synechococcus sp. (strain RCC307).